The sequence spans 547 residues: Chaperonin GroEL (547 aa).

Residues 30–33 (TLGP), lysine 51, 87–91 (DGTTT), glycine 415, and aspartate 496 each bind ATP.

This sequence belongs to the chaperonin (HSP60) family. In terms of assembly, forms a cylinder of 14 subunits composed of two heptameric rings stacked back-to-back. Interacts with the co-chaperonin GroES.

The protein resides in the cytoplasm. The enzyme catalyses ATP + H2O + a folded polypeptide = ADP + phosphate + an unfolded polypeptide.. Together with its co-chaperonin GroES, plays an essential role in assisting protein folding. The GroEL-GroES system forms a nano-cage that allows encapsulation of the non-native substrate proteins and provides a physical environment optimized to promote and accelerate protein folding. In Pelodictyon phaeoclathratiforme (strain DSM 5477 / BU-1), this protein is Chaperonin GroEL.